We begin with the raw amino-acid sequence, 270 residues long: 4-hydroxy-tetrahydrodipicolinate reductase (270 aa).

NAD(+)-binding positions include 9–14 and glutamate 35; that span reads GAGGRM. Position 36 (arginine 36) interacts with NADP(+). NAD(+)-binding positions include 99 to 101 and 123 to 126; these read GTT and ASNF. Histidine 156 serves as the catalytic Proton donor/acceptor. (S)-2,3,4,5-tetrahydrodipicolinate is bound at residue histidine 157. Lysine 160 functions as the Proton donor in the catalytic mechanism. 166 to 167 provides a ligand contact to (S)-2,3,4,5-tetrahydrodipicolinate; the sequence is GT.

It belongs to the DapB family.

It is found in the cytoplasm. The enzyme catalyses (S)-2,3,4,5-tetrahydrodipicolinate + NAD(+) + H2O = (2S,4S)-4-hydroxy-2,3,4,5-tetrahydrodipicolinate + NADH + H(+). It catalyses the reaction (S)-2,3,4,5-tetrahydrodipicolinate + NADP(+) + H2O = (2S,4S)-4-hydroxy-2,3,4,5-tetrahydrodipicolinate + NADPH + H(+). It functions in the pathway amino-acid biosynthesis; L-lysine biosynthesis via DAP pathway; (S)-tetrahydrodipicolinate from L-aspartate: step 4/4. Its function is as follows. Catalyzes the conversion of 4-hydroxy-tetrahydrodipicolinate (HTPA) to tetrahydrodipicolinate. This is 4-hydroxy-tetrahydrodipicolinate reductase from Haemophilus influenzae (strain ATCC 51907 / DSM 11121 / KW20 / Rd).